Consider the following 282-residue polypeptide: UDP-3-O-acyl-N-acetylglucosamine deacetylase (282 aa).

The Zn(2+) site is built by His81, His239, and Asp243. The active-site Proton donor is His266.

Belongs to the LpxC family. Requires Zn(2+) as cofactor.

It catalyses the reaction a UDP-3-O-[(3R)-3-hydroxyacyl]-N-acetyl-alpha-D-glucosamine + H2O = a UDP-3-O-[(3R)-3-hydroxyacyl]-alpha-D-glucosamine + acetate. It functions in the pathway glycolipid biosynthesis; lipid IV(A) biosynthesis; lipid IV(A) from (3R)-3-hydroxytetradecanoyl-[acyl-carrier-protein] and UDP-N-acetyl-alpha-D-glucosamine: step 2/6. In terms of biological role, catalyzes the hydrolysis of UDP-3-O-myristoyl-N-acetylglucosamine to form UDP-3-O-myristoylglucosamine and acetate, the committed step in lipid A biosynthesis. This is UDP-3-O-acyl-N-acetylglucosamine deacetylase from Chlamydia pneumoniae (Chlamydophila pneumoniae).